The primary structure comprises 386 residues: Patatin group M-1 (386 aa).

A signal peptide spans 1–23 (MATTKSFLILFFMILATTSSTCA). The PNPLA domain maps to 32-229 (LSIDGGGIKG…TVGDPALLSL (198 aa)). The GXGXXG motif lies at 36–41 (GGGIKG). A GXSXG motif is present at residues 75 to 79 (GTSTG). The active-site Nucleophile is the Ser-77. Asn-115 is a glycosylation site (N-linked (GlcNAc...) asparagine). Asp-215 acts as the Proton acceptor in catalysis. Positions 215-217 (DGG) match the DGA/G motif.

Belongs to the patatin family. As to expression, tuber.

It localises to the vacuole. In terms of biological role, probable lipolytic acyl hydrolase (LAH), an activity which is thought to be involved in the response of tubers to pathogens. The sequence is that of Patatin group M-1 from Solanum tuberosum (Potato).